Here is a 436-residue protein sequence, read N- to C-terminus: Glutamate-1-semialdehyde 2,1-aminomutase (436 aa).

At Lys-269 the chain carries N6-(pyridoxal phosphate)lysine.

The protein belongs to the class-III pyridoxal-phosphate-dependent aminotransferase family. HemL subfamily. As to quaternary structure, homodimer. Requires pyridoxal 5'-phosphate as cofactor.

It is found in the cytoplasm. The catalysed reaction is (S)-4-amino-5-oxopentanoate = 5-aminolevulinate. The protein operates within porphyrin-containing compound metabolism; protoporphyrin-IX biosynthesis; 5-aminolevulinate from L-glutamyl-tRNA(Glu): step 2/2. Its pathway is porphyrin-containing compound metabolism; chlorophyll biosynthesis. In Heliobacterium modesticaldum (strain ATCC 51547 / Ice1), this protein is Glutamate-1-semialdehyde 2,1-aminomutase.